The following is a 561-amino-acid chain: Arginine--tRNA ligase (561 aa).

Positions 123-133 match the 'HIGH' region motif; it reads PNIAKDMHVGH.

It belongs to the class-I aminoacyl-tRNA synthetase family. In terms of assembly, monomer.

It localises to the cytoplasm. The catalysed reaction is tRNA(Arg) + L-arginine + ATP = L-arginyl-tRNA(Arg) + AMP + diphosphate. This is Arginine--tRNA ligase (argS) from Chlamydia pneumoniae (Chlamydophila pneumoniae).